Consider the following 142-residue polypeptide: uncharacterized protein (142 aa).

This is an uncharacterized protein from Gallid herpesvirus 2 (strain GA) (GaHV-2).